The primary structure comprises 373 residues: RNA cytidine acetyltransferase (373 aa).

Arg53 contributes to the ATP binding site. Acetyl-CoA-binding positions include Ile216–Thr218 and Thr223–Ser229. Residues Gly246 to Glu271 form a disordered region. Residue Arg313 coordinates acetyl-CoA.

Belongs to the RNA cytidine acetyltransferase family. NAT10 subfamily.

The protein localises to the nucleus. Its subcellular location is the nucleolus. It catalyses the reaction a cytidine in 18S rRNA + acetyl-CoA + ATP + H2O = an N(4)-acetylcytidine in 18S rRNA + ADP + phosphate + CoA + H(+). The catalysed reaction is a cytidine in tRNA + acetyl-CoA + ATP + H2O = an N(4)-acetylcytidine in tRNA + ADP + phosphate + CoA + H(+). Its function is as follows. RNA cytidine acetyltransferase with specificity toward both 18S rRNA and tRNAs. Catalyzes the formation of N(4)-acetylcytidine (ac4C) in 18S rRNA. Required for early nucleolar cleavages of precursor rRNA at sites A0, A1 and A2 during 18S rRNA synthesis. Catalyzes the formation of ac4C in serine and leucine tRNAs. Requires a tRNA-binding adapter protein for full tRNA acetyltransferase activity but not for 18S rRNA acetylation. The sequence is that of RNA cytidine acetyltransferase from Achlya ambisexualis (Water mold).